The sequence spans 176 residues: MTLQPNLQAKEMELSLVGLQNSGKTSLVNVVATGEYSEDMIPTVGFNMRKVTKENVAIRLWDLGGQPRFRCMWERYCRAVSMIVYVVDAADTENLSVSRSELHDLLSNASLIGIPLLVLGNKIDIHGALSKEALTEEMGLSSVTSREVCCLMISCKNPTTIDQLTDWLVNHSKSKN.

GTP-binding positions include asparagine 21–serine 26, methionine 40–threonine 43, aspartate 62–glutamine 66, and asparagine 121–aspartate 124.

It belongs to the small GTPase superfamily. Arf family. Interacts with tubulin.

It localises to the late endosome membrane. Its subcellular location is the lysosome membrane. The protein localises to the cytoplasm. It is found in the cytoskeleton. The protein resides in the spindle. In terms of biological role, may play a role in lysosome motility. May play a role in chromosome segregation. The sequence is that of ADP-ribosylation factor-like protein 8d from Arabidopsis thaliana (Mouse-ear cress).